Reading from the N-terminus, the 175-residue chain is Cytochrome c-type biogenesis protein CcmE (175 aa).

The Cytoplasmic portion of the chain corresponds to 1–8 (MNAVRRKK). The chain crosses the membrane as a helical; Signal-anchor for type II membrane protein span at residues 9 to 29 (LIWVAATLAGAIIAVLLVIYA). At 30 to 175 (IGQQTDYYFD…GNHTTSTLQE (146 aa)) the chain is on the periplasmic side. His124 and Tyr128 together coordinate heme. The interval 142–175 (AAKGVTPTSEQFSPAIPVKQTAGEGNHTTSTLQE) is disordered.

Belongs to the CcmE/CycJ family.

It localises to the cell inner membrane. Its function is as follows. Heme chaperone required for the biogenesis of c-type cytochromes. Transiently binds heme delivered by CcmC and transfers the heme to apo-cytochromes in a process facilitated by CcmF and CcmH. The chain is Cytochrome c-type biogenesis protein CcmE from Psychrobacter sp. (strain PRwf-1).